Consider the following 678-residue polypeptide: RNA helicase NPH-II (678 aa).

The 177-residue stretch at 175–351 (FTSWARRVPV…EFFAESVFVH (177 aa)) folds into the Helicase ATP-binding domain. 188–195 (GDTGVGKT) contacts ATP. The short motif at 300–303 (DEVH) is the DEXH box element. One can recognise a Helicase C-terminal domain in the interval 371 to 546 (PLNRFMYIEE…VFDLQLPEDL (176 aa)).

It belongs to the DEAD box helicase family. DEAH subfamily. Monomer.

The protein localises to the virion. It catalyses the reaction ATP + H2O = ADP + phosphate + H(+). In terms of biological role, NTP-dependent helicase that catalyzes unidirectional unwinding of 3'tailed duplex RNAs and plays an important role during transcription of early mRNAs, presumably by preventing R-loop formation behind the elongating RNA polymerase. Might also play a role in the export of newly synthesized mRNA chains out of the core into the cytoplasm. Required for replication and propagation of viral particles. The polypeptide is RNA helicase NPH-II (OPG084) (Oryctolagus cuniculus (Rabbit)).